Reading from the N-terminus, the 168-residue chain is Peptide deformylase (168 aa).

The Fe cation site is built by Cys92 and His134. The active site involves Glu135. Residue His138 coordinates Fe cation.

It belongs to the polypeptide deformylase family. Fe(2+) is required as a cofactor.

It carries out the reaction N-terminal N-formyl-L-methionyl-[peptide] + H2O = N-terminal L-methionyl-[peptide] + formate. Removes the formyl group from the N-terminal Met of newly synthesized proteins. Requires at least a dipeptide for an efficient rate of reaction. N-terminal L-methionine is a prerequisite for activity but the enzyme has broad specificity at other positions. This is Peptide deformylase from Azotobacter vinelandii (strain DJ / ATCC BAA-1303).